The primary structure comprises 248 residues: 14-3-3 protein (248 aa).

Coiled-coil stretches lie at residues 13–33 (MAQLNENAERYDEMVETMRKI) and 91–111 (RQKIEKELSDICNDILKLLQE). Residue 135-136 (RY) coordinates O-phospho-L-serine. Position 214 is a phosphothreonine (Thr214). A Putative polyglycylation target motif (T/G)X0-1(D/E)X1-3-G(D/E)X1-2(gE)2-4, where X is polar or negatively charged amino acid, and gE is polyglycylated glutamine motif is present at residues 237 to 248 (TDSAGDDNAEEK). Position 246 is a 5-glutamyl polyglycine (Glu246).

The protein belongs to the 14-3-3 family. Homodimer. Homodimerizes via N-terminal domains. Oligomerizes forming homotrimers, homotetramers and protein filaments. Oligomerization is hindered by polyglycylation in vivo. Interacts with a large number of both cytosolic and membrane proteins in trophozoites and encysting parasites. Interacts with a serine/threonine protein kinase GL50803_112076 (gCDC7). Component of a multiprotein complex containing gCDC7 and GL50803_94117 (gDBF4), a regulatory subunit of gCDC7, during both the trophozoite and encysting stages of the parasite. Interacts with fructose-bisphosphate aldolase GL50803_11043 (gFBA), pyruvate kinase GL50803_17143 (gPyk), acetyl-CoA synthetase GL50803_13608 (gACS), protein kinase GL50803_22165 (gSTE), DEAD box RNA helicase GL50803_34684 (gVASA) and Golgi/cell cycle associated protein GL50803_17472 (gGCCA). Interacts with actin. Interacts with both monomeric phosphorylated and unphosphorylated actin. The interaction is enhanced by phosphorylation of actin and inhibited by Rho GTPase Rac. Post-translationally, phosphorylated constitutively throughout the life cycle. Phosphorylation is very high in trophozoites and encysting cells of 12 hours. Phosphorylated during excystation. Phosphorylation promotes its binding to various target proteins and is critical for encystation process. Phosphorylation modification is not influenced by polyglycylation modification. In terms of processing, polyglycylated on a glutamate residue, resulting in polyglycine chain on the gamma-carboxyl group. Polyglycylated by the tubulin--tyrosine ligase-like protein GL50803_8456 (gTTLL3). The polyglycine chain is shortened by metallopeptidases of the M20 family, namely dipeptidases GL50803_15832 (gDIP1) and GL50803_8407 (gDIP2). The length of the polyglycine chain is developmental stage-dependent. In trophozoites, glycine residues range from 10 to 31, with the greatest occurrence of 21 residues. In 12 hour encystation stage, glycine residues range from 6 to 22, with the greatest occurrence of 10 residues. The differential rate of polyglycylation/deglycylation during the encystation process regulates the intracellular localization of this protein. Relocalizes partially from the cytoplasm inside the nuclei following the shortening of the polyglycine chain in encysting cells. Polyglycylation modification is not influenced by phosphorylation modification. Polyglycylation prevents oligomerization in vivo.

It is found in the cytoplasm. Its subcellular location is the cytoskeleton. The protein resides in the nucleus. The protein localises to the cell projection. It localises to the cilium. It is found in the flagellum. Its subcellular location is the spindle. The protein resides in the nucleus envelope. The protein localises to the endoplasmic reticulum. Adapter protein implicated in the regulation of a large spectrum of both general and specialized signaling pathways. Binds to a large number of partners, usually by recognition of a phosphoserine or phosphothreonine motif. Binding generally results in the modulation of the activity of the binding partner. Binds with varying affinity to various synthetic phosphopeptides having a consensus binding motif RSX(pS/pT)XP, called mode-1, where X is any residue and pS/pT is a phosphorylated serine/threonine, and to synthetic phosphopeptides having a consensus binding motif Xp(S/T)X1-2-COOH, called mode-3, in which the phosphorylated residue occupies the penultimate C-terminal position in the target protein, but does not bind to their unphosphorylated counterparts. Binds to synthetic human RAF1 phosphopeptides, but not to their unphosphorylated forms. Binds to difopein, a polypeptide containing a phosphorylation-independent binding motif. Involved in encystation. Involved in cell proliferation. Required for actin and tubulin cytoskeletal organization. Regulates actin filament formation and nuclear size. This chain is 14-3-3 protein, found in Giardia intestinalis (strain ATCC 50803 / WB clone C6) (Giardia lamblia).